We begin with the raw amino-acid sequence, 149 residues long: L-alanine exporter AlaE (149 aa).

4 helical membrane passes run 16-36, 46-66, 85-105, and 112-132; these read FAMV…LSGM, LVAI…RDLI, VLAY…TVGA, and AAVS…GYFL.

It belongs to the AlaE exporter family.

The protein resides in the cell inner membrane. In terms of biological role, exports L-alanine. The polypeptide is L-alanine exporter AlaE (Salmonella arizonae (strain ATCC BAA-731 / CDC346-86 / RSK2980)).